A 2210-amino-acid polypeptide reads, in one-letter code: Orsellinic acid synthase ArmB (2210 aa).

The interval 38–261 is N-terminal acylcarrier protein transacylase domain (SAT); the sequence is LLLDACHYAF…HKTTVDALYH (224 aa). One can recognise a Ketosynthase family 3 (KS3) domain in the interval 391–817; sequence QEPIAICGMS…GSNGALLLEE (427 aa). Catalysis depends on for beta-ketoacyl synthase activity residues Cys-561, His-696, and His-736. The malonyl-CoA:ACP transacylase (MAT) domain stretch occupies residues 915–1240; the sequence is VFVFSGQGGQ…GLTLSSSLSQ (326 aa). The active-site For acyl/malonyl transferase activity is Ser-1009. An N-terminal hotdog fold region spans residues 1307–1437; the sequence is MLQSWAQFPS…GQFRPLLVVD (131 aa). The PKS/mFAS DH domain occupies 1307–1614; it reads MLQSWAQFPS…FKKLRLNTLQ (308 aa). Residues 1336–1611 are product template (PT) domain; it reads ITGHIVGDVP…GMCFKKLRLN (276 aa). Catalysis depends on His-1339, which acts as the Proton acceptor; for dehydratase activity. Positions 1464-1614 are C-terminal hotdog fold; that stretch reads AEVFTTRTAY…FKKLRLNTLQ (151 aa). Asp-1525 serves as the catalytic Proton donor; for dehydratase activity. The Carrier 1 domain occupies 1660–1735; that stretch reads VDVQNTVLNI…ELVREISSTV (76 aa). The residue at position 1694 (Ser-1694) is an O-(pantetheine 4'-phosphoryl)serine. The disordered stretch occupies residues 1739–1761; sequence AATAVNTPETASTPEPTLQGDAS. One can recognise a Carrier 2 domain in the interval 1845-1922; it reads SSPSSDLVDT…AVNQYISSKR (78 aa). At Ser-1882 the chain carries O-(pantetheine 4'-phosphoryl)serine. Residues 1920–1946 are disordered; sequence SKRPGKSPKQVEETAMDPDREEDLSDL. Acidic residues predominate over residues 1933–1944; it reads TAMDPDREEDLS. Positions 1963 to 2202 are thioesterase (TE) domain; the sequence is VPMSVQKSSS…LGAVTQALVD (240 aa).

Its pathway is secondary metabolite biosynthesis. Non-reducing polyketide synthase, part of the gene cluster that mediates the biosynthesis of melleolides, a range of antifungal and phytotoxic polyketide derivatives composed of an orsellinic acid (OA) moiety esterified to various sesquiterpene alcohols. The first step in melleolides biosynthesis is performed by the delta(6)-protoilludene synthase PRO1 which catalyzes the cyclization of farnesyl diphosphate to protoilludene. The orsellinic acid synthase armB produces OA by condensing acetyl-CoA with 3 malonyl-CoA units in a three-round chain elongation reaction folowed by a C2-C7 ring closure. ArmB further catalyzes the trans-esterification of OA to the various sesquiterpene alcohols resulting from the hydroxylation of protoilludene. The melleolides cluster also includes 5 cytochrome P450 monooxygenases, 4 NAD(+)-dependent oxidoreductases, one flavin-dependent oxidoreductase, and one O-methyltransferase. The cytochrome P450 monooxygenases may be involved in protoilludene hydroxylation to elaborate melleolides with multiple alcohol groups, such as melleolide D, which carries alcohol functionalities at C-4, C-5, C-10, and C-13. The role of the NAD(+)-dependent enzymes remains unknown. Numerous melleolides, including arnamial, show 5'-O-methylation of the aromatic moiety which may be catalyzed by the methyltransferase encoded in the cluster. The flavin-dependent oxidoreductase might represent the dehydrogenase yielding the aldehyde in position 1 of arnamial and other melleolides. Finally, several halogenase localized outside of the cluster (armH1 to armH5), are able to catalyze the transfer of a single chlorine atom to the melleolide backbone, resulting in a 6'-chloromelleolide product. The sequence is that of Orsellinic acid synthase ArmB from Armillaria ostoyae (Armillaria root rot fungus).